Here is a 521-residue protein sequence, read N- to C-terminus: Zinc finger protein GLIS2 (521 aa).

An interaction with CTNND1 region spans residues 35–174 (ALHRELGLVD…AKQLVCRWAK (140 aa)). 2 disordered regions span residues 41–63 (GLVD…LLNP) and 84–110 (SPPS…DLPP). The segment covering 49 to 58 (PGSPGSPPPG) has biased composition (pro residues). Residues 71 to 137 (GRFSAAPLVD…SSFQFFLPLG (67 aa)) are transcription activation. The segment covering 84-100 (SPPSGLDSPNGSSSLSP) has biased composition (low complexity). The transcription repression stretch occupies residues 148–171 (SFLPPPKDKCLSPELPLAKQLVCR). Residues 168–193 (LVCRWAKCNQLFELLQDLVDHVNDHH) form a C2H2-type 1 zinc finger. A C2H2-type 2; atypical zinc finger spans residues 202 to 229 (YCCHWEGCARHGRGFNARYKMLIHIRTH). 3 consecutive C2H2-type zinc fingers follow at residues 235–257 (HRCP…NRSH), 263–287 (YVCP…TRTH), and 293–317 (YYCK…IKAH). The interval 436 to 501 (AGSKAEGEKG…NSAASSPEVL (66 aa)) is disordered. The span at 455–470 (GLEDHKTPLERTERSR) shows a compositional bias: basic and acidic residues. The span at 487-496 (DLSTGNSAAS) shows a compositional bias: polar residues.

The protein belongs to the GLI C2H2-type zinc-finger protein family. As to quaternary structure, interacts with CTBP1 and HDAC3. Interacts with CTNNB1 and CTNND1. Interacts with SUFU. Post-translationally, C-terminus cleavage is induced by interaction with CTNND1 and enhances by Src tyrosine kinase. In terms of tissue distribution, expressed at high levels in kidney, and at lower levels in heart and lung.

It localises to the nucleus speckle. It is found in the cytoplasm. In terms of biological role, can act either as a transcriptional repressor or as a transcriptional activator, depending on the cell context. Acts as a repressor of the Hedgehog signaling pathway. Represses the Hedgehog-dependent expression of Wnt4. Necessary to maintain the differentiated epithelial phenotype in renal cells through the inhibition of SNAI1, which itself induces the epithelial-to-mesenchymal transition. Represses transcriptional activation by CTNNB1 in the Wnt signaling pathway. May act by recruiting the corepressors CTBP1 and HDAC3. May be involved in neuron differentiation. The polypeptide is Zinc finger protein GLIS2 (Glis2) (Mus musculus (Mouse)).